A 382-amino-acid polypeptide reads, in one-letter code: Zinc metalloproteinase nas-7 (382 aa).

The signal sequence occupies residues 1 to 18; that stretch reads MLLPWIITIVTVIPATLG. Residues 19-79 constitute a propeptide that is removed on maturation; sequence HRNRVQDDEM…DIRLPRRHKR (61 aa). Residues 80-273 enclose the Peptidase M12A domain; sequence NGVSRAAKLW…SKINRMYNCP (194 aa). 5 disulfides stabilise this stretch: cysteine 122–cysteine 272, cysteine 144–cysteine 163, cysteine 348–cysteine 382, cysteine 355–cysteine 375, and cysteine 362–cysteine 379. Histidine 171 lines the Zn(2+) pocket. Glutamate 172 is a catalytic residue. Residues histidine 175 and histidine 181 each coordinate Zn(2+). A ShKT domain is found at 348–382; sequence CEDRITVCWWTADRCRSPAIYQVMSSLCPKTCKFC.

Zn(2+) serves as cofactor. Expressed in the head of adult hermaphrodites but not within pharynx cells. Expressed in pharyngeal muscles, mc cells, intestine, hypodermal seam cells, arcade cells, spermatheca, vulva and rectal epithelial cells.

It localises to the secreted. In terms of biological role, metalloprotease. The sequence is that of Zinc metalloproteinase nas-7 (nas-7) from Caenorhabditis elegans.